The sequence spans 166 residues: Cytochrome c-type biogenesis protein CcmE (166 aa).

Residues 1–7 are Cytoplasmic-facing; the sequence is MTRKQKR. The chain crosses the membrane as a helical; Signal-anchor for type II membrane protein span at residues 8-28; sequence LALIASGAVVVSLAVGLVMFA. Residues 29–166 are Periplasmic-facing; that stretch reads LRDNIVFFYS…QTAPQGAQAY (138 aa). Heme-binding residues include His-122 and Tyr-126. The interval 139–166 is disordered; sequence GVWQEEGKSEGKPSAIPAQTAPQGAQAY.

It belongs to the CcmE/CycJ family.

The protein localises to the cell inner membrane. Heme chaperone required for the biogenesis of c-type cytochromes. Transiently binds heme delivered by CcmC and transfers the heme to apo-cytochromes in a process facilitated by CcmF and CcmH. In Methylocella silvestris (strain DSM 15510 / CIP 108128 / LMG 27833 / NCIMB 13906 / BL2), this protein is Cytochrome c-type biogenesis protein CcmE.